We begin with the raw amino-acid sequence, 478 residues long: Nuclear distribution protein PAC1 (478 aa).

The LisH domain occupies 9–41; sequence QAEELHKAMIAYLLSANLPKSAAALREELADSV. Residues 60-87 adopt a coiled-coil conformation; it reads TSVVRLQKKIMDLESRNNALQSELDSAT. WD repeat units lie at residues 113-154, 156-196, 200-247, 250-289, 292-352, 354-393, 398-439, and 440-477; these read SHRE…RTIK, HTKA…KNIR, GHDH…CVKT, GHVD…TKST, GHEH…IKTL, GHDN…KCVR, AHGH…AASA, and INGV…RVFA.

It belongs to the WD repeat LIS1/nudF family. In terms of assembly, self-associates. Interacts with NDL1 and dynein.

The protein localises to the cytoplasm. The protein resides in the cytoskeleton. It is found in the spindle pole. Its function is as follows. Positively regulates the activity of the minus-end directed microtubule motor protein dynein. May enhance dynein-mediated microtubule sliding by targeting dynein to the microtubule plus end. Required for nuclear migration during vegetative growth as well as development. Required for retrograde early endosome (EE) transport from the hyphal tip. Required for localization of dynein to the mitotic spindle poles. Recruits additional proteins to the dynein complex at SPBs. This Paracoccidioides brasiliensis (strain Pb18) protein is Nuclear distribution protein PAC1.